Consider the following 467-residue polypeptide: Septin-10 (467 aa).

Positions 63–329 constitute a Septin-type G domain; that stretch reads QGFCFNILCV…ELYRRCKLEE (267 aa). Residues 73 to 80 form a G1 motif region; that stretch reads GETGIGKS. GTP-binding positions include 73-80, glycine 128, 209-217, glycine 263, and arginine 278; these read GETGIGKS and KADTVSKTE. Residues 125 to 128 form a G3 motif region; sequence NTVG. The G4 motif stretch occupies residues 208–211; it reads AKAD.

It belongs to the TRAFAC class TrmE-Era-EngA-EngB-Septin-like GTPase superfamily. Septin GTPase family. Septins polymerize into heterooligomeric protein complexes that form filaments, and can associate with cellular membranes, actin filaments and microtubules. GTPase activity is required for filament formation. Interacts with ADGB. Proteolytically cleaved in vitro in a calmodulin-dependent manner.

It localises to the cytoplasm. Its subcellular location is the cytoskeleton. The protein resides in the cell projection. It is found in the cilium. The protein localises to the flagellum. Functionally, filament-forming cytoskeletal GTPase. May play a role in cytokinesis (Potential). The sequence is that of Septin-10 from Pongo abelii (Sumatran orangutan).